The following is a 430-amino-acid chain: Phosphoribosylamine--glycine ligase (430 aa).

The 206-residue stretch at 109–314 (RGLMNKYGID…FLTIAEHIIN (206 aa)) folds into the ATP-grasp domain. ATP is bound at residue 136-192 (IREYPGDLAVKPTGLTGGKGVKVMGEQVDREGAVEYAMTLKDQVIILEERLLGEEFT). Residues Gln272, Glu284, and Asn286 each coordinate Mg(2+). Residues Gln272, Glu284, and Asn286 each contribute to the Mn(2+) site.

Belongs to the GARS family. Requires Mg(2+) as cofactor. Mn(2+) serves as cofactor.

It carries out the reaction 5-phospho-beta-D-ribosylamine + glycine + ATP = N(1)-(5-phospho-beta-D-ribosyl)glycinamide + ADP + phosphate + H(+). It functions in the pathway purine metabolism; IMP biosynthesis via de novo pathway; N(1)-(5-phospho-D-ribosyl)glycinamide from 5-phospho-alpha-D-ribose 1-diphosphate: step 2/2. The polypeptide is Phosphoribosylamine--glycine ligase (Methanocorpusculum labreanum (strain ATCC 43576 / DSM 4855 / Z)).